The sequence spans 417 residues: Serine hydroxymethyltransferase 2 (417 aa).

Residues Leu-121 and 125–127 contribute to the (6S)-5,6,7,8-tetrahydrofolate site; that span reads GHL. Position 230 is an N6-(pyridoxal phosphate)lysine (Lys-230). A (6S)-5,6,7,8-tetrahydrofolate-binding site is contributed by 355–357; sequence SPF.

It belongs to the SHMT family. In terms of assembly, homodimer. It depends on pyridoxal 5'-phosphate as a cofactor.

It is found in the cytoplasm. It carries out the reaction (6R)-5,10-methylene-5,6,7,8-tetrahydrofolate + glycine + H2O = (6S)-5,6,7,8-tetrahydrofolate + L-serine. The protein operates within one-carbon metabolism; tetrahydrofolate interconversion. It functions in the pathway amino-acid biosynthesis; glycine biosynthesis; glycine from L-serine: step 1/1. Catalyzes the reversible interconversion of serine and glycine with tetrahydrofolate (THF) serving as the one-carbon carrier. This reaction serves as the major source of one-carbon groups required for the biosynthesis of purines, thymidylate, methionine, and other important biomolecules. Also exhibits THF-independent aldolase activity toward beta-hydroxyamino acids, producing glycine and aldehydes, via a retro-aldol mechanism. The sequence is that of Serine hydroxymethyltransferase 2 from Pseudomonas savastanoi pv. phaseolicola (strain 1448A / Race 6) (Pseudomonas syringae pv. phaseolicola (strain 1448A / Race 6)).